The sequence spans 200 residues: Recombination protein RecR (200 aa).

The C4-type zinc-finger motif lies at 58 to 73 (CSLCCNLTDEDPCSIC). In terms of domain architecture, Toprim spans 81–176 (NLLCVVEEPR…KVTRIAHGIP (96 aa)).

It belongs to the RecR family.

Its function is as follows. May play a role in DNA repair. It seems to be involved in an RecBC-independent recombinational process of DNA repair. It may act with RecF and RecO. In Desulforamulus reducens (strain ATCC BAA-1160 / DSM 100696 / MI-1) (Desulfotomaculum reducens), this protein is Recombination protein RecR.